A 335-amino-acid chain; its full sequence is DNA-directed RNA polymerase subunit alpha (335 aa).

Residues 1-233 form an alpha N-terminal domain (alpha-NTD) region; it reads MIRDEISVSI…DLFIPFLHGE (233 aa). An alpha C-terminal domain (alpha-CTD) region spans residues 264-335; it reads KEKIAFQLIF…KLFAIDPPRN (72 aa).

This sequence belongs to the RNA polymerase alpha chain family. In plastids the minimal PEP RNA polymerase catalytic core is composed of four subunits: alpha, beta, beta', and beta''. When a (nuclear-encoded) sigma factor is associated with the core the holoenzyme is formed, which can initiate transcription.

The protein resides in the plastid. It localises to the chloroplast. It catalyses the reaction RNA(n) + a ribonucleoside 5'-triphosphate = RNA(n+1) + diphosphate. In terms of biological role, DNA-dependent RNA polymerase catalyzes the transcription of DNA into RNA using the four ribonucleoside triphosphates as substrates. This is DNA-directed RNA polymerase subunit alpha from Pinus thunbergii (Japanese black pine).